Here is a 539-residue protein sequence, read N- to C-terminus: Hydroxylamine reductase (539 aa).

Cysteine 3, cysteine 6, cysteine 15, and cysteine 21 together coordinate [4Fe-4S] cluster. Hybrid [4Fe-2O-2S] cluster-binding residues include histidine 235, glutamate 259, cysteine 303, cysteine 394, cysteine 422, cysteine 447, glutamate 482, and lysine 484. Cysteine 394 carries the post-translational modification Cysteine persulfide.

The protein belongs to the HCP family. [4Fe-4S] cluster serves as cofactor. It depends on hybrid [4Fe-2O-2S] cluster as a cofactor.

The protein resides in the cytoplasm. The enzyme catalyses A + NH4(+) + H2O = hydroxylamine + AH2 + H(+). Catalyzes the reduction of hydroxylamine to form NH(3) and H(2)O. The sequence is that of Hydroxylamine reductase from Methanocaldococcus jannaschii (strain ATCC 43067 / DSM 2661 / JAL-1 / JCM 10045 / NBRC 100440) (Methanococcus jannaschii).